Reading from the N-terminus, the 288-residue chain is Adenylate kinase (288 aa).

Residue 65 to 70 (GVGKGT) participates in ATP binding. An NMP region spans residues 85 to 114 (ATGDLVRDELKSSGPLSKQLAEIVNQGKLV). Residues T86, R91, 112-114 (KLV), 142-145 (GFPR), and Q149 contribute to the AMP site. The interval 178–226 (GRRICSECGKNFNVASIDVAGENGAPRISMARLNPPFTVCFKLITRADD) is LID. R179 contacts ATP. AMP contacts are provided by R223 and R234. G262 lines the ATP pocket.

This sequence belongs to the adenylate kinase family. In terms of assembly, monomer.

Its subcellular location is the cytoplasm. The catalysed reaction is AMP + ATP = 2 ADP. Catalyzes the reversible transfer of the terminal phosphate group between ATP and AMP. Plays an important role in cellular energy homeostasis and in adenine nucleotide metabolism. The protein is Adenylate kinase (ADK) of Solanum tuberosum (Potato).